A 476-amino-acid polypeptide reads, in one-letter code: Glycogen synthase (476 aa).

K15 lines the ADP-alpha-D-glucose pocket.

The protein belongs to the glycosyltransferase 1 family. Bacterial/plant glycogen synthase subfamily.

It carries out the reaction [(1-&gt;4)-alpha-D-glucosyl](n) + ADP-alpha-D-glucose = [(1-&gt;4)-alpha-D-glucosyl](n+1) + ADP + H(+). The protein operates within glycan biosynthesis; glycogen biosynthesis. In terms of biological role, synthesizes alpha-1,4-glucan chains using ADP-glucose. The chain is Glycogen synthase from Streptococcus equi subsp. equi (strain 4047).